The sequence spans 173 residues: Shikimate kinase (173 aa).

11–16 contributes to the ATP binding site; that stretch reads GTGKTS. Thr-15 lines the Mg(2+) pocket. Residues Asp-33, Arg-57, and Gly-79 each coordinate substrate. Arg-117 lines the ATP pocket. Arg-136 contacts substrate.

This sequence belongs to the shikimate kinase family. In terms of assembly, monomer. It depends on Mg(2+) as a cofactor.

Its subcellular location is the cytoplasm. The catalysed reaction is shikimate + ATP = 3-phosphoshikimate + ADP + H(+). It participates in metabolic intermediate biosynthesis; chorismate biosynthesis; chorismate from D-erythrose 4-phosphate and phosphoenolpyruvate: step 5/7. Functionally, catalyzes the specific phosphorylation of the 3-hydroxyl group of shikimic acid using ATP as a cosubstrate. The chain is Shikimate kinase from Thermodesulfovibrio yellowstonii (strain ATCC 51303 / DSM 11347 / YP87).